The sequence spans 251 residues: NADH-quinone oxidoreductase subunit C (251 aa).

The tract at residues 1 to 34 (MSDANNTAGDANEVNPEKDLSAENLPGQRGQGGE) is disordered.

It belongs to the complex I 30 kDa subunit family. NDH-1 is composed of 14 different subunits. Subunits NuoB, C, D, E, F, and G constitute the peripheral sector of the complex.

It is found in the cell membrane. It carries out the reaction a quinone + NADH + 5 H(+)(in) = a quinol + NAD(+) + 4 H(+)(out). NDH-1 shuttles electrons from NADH, via FMN and iron-sulfur (Fe-S) centers, to quinones in the respiratory chain. The immediate electron acceptor for the enzyme in this species is believed to be a menaquinone. Couples the redox reaction to proton translocation (for every two electrons transferred, four hydrogen ions are translocated across the cytoplasmic membrane), and thus conserves the redox energy in a proton gradient. In Streptomyces coelicolor (strain ATCC BAA-471 / A3(2) / M145), this protein is NADH-quinone oxidoreductase subunit C.